The following is an 88-amino-acid chain: Small ribosomal subunit protein bS16c (88 aa).

It belongs to the bacterial ribosomal protein bS16 family.

It is found in the plastid. It localises to the chloroplast. The polypeptide is Small ribosomal subunit protein bS16c (Gossypium hirsutum (Upland cotton)).